The following is a 379-amino-acid chain: Sterol 24-C-methyltransferase erg-4 (379 aa).

This sequence belongs to the class I-like SAM-binding methyltransferase superfamily. Erg6/SMT family.

The enzyme catalyses lanosterol + S-adenosyl-L-methionine = eburicol + S-adenosyl-L-homocysteine + H(+). The protein operates within steroid metabolism; ergosterol biosynthesis. In terms of biological role, catalyzes the methyl transfer from S-adenosyl-methionine to the C-24 of lanosterol to form eburicol. This chain is Sterol 24-C-methyltransferase erg-4, found in Neurospora crassa (strain ATCC 24698 / 74-OR23-1A / CBS 708.71 / DSM 1257 / FGSC 987).